A 104-amino-acid polypeptide reads, in one-letter code: Glutaredoxin-C15 (104 aa).

A Glutaredoxin domain is found at 1–103 (MERVAKLSTE…PMLKAAGAIW (103 aa)). Residues cysteine 21 and cysteine 24 are joined by a disulfide bond.

Belongs to the glutaredoxin family. CC-type subfamily.

Its subcellular location is the cytoplasm. Functionally, has a glutathione-disulfide oxidoreductase activity in the presence of NADPH and glutathione reductase. Reduces low molecular weight disulfides and proteins. The protein is Glutaredoxin-C15 (GRXC15) of Oryza sativa subsp. japonica (Rice).